Here is a 256-residue protein sequence, read N- to C-terminus: Ubiquinone/menaquinone biosynthesis C-methyltransferase UbiE (256 aa).

2 residues coordinate S-adenosyl-L-methionine: Thr-78 and Asp-99.

Belongs to the class I-like SAM-binding methyltransferase superfamily. MenG/UbiE family.

It carries out the reaction a 2-demethylmenaquinol + S-adenosyl-L-methionine = a menaquinol + S-adenosyl-L-homocysteine + H(+). The catalysed reaction is a 2-methoxy-6-(all-trans-polyprenyl)benzene-1,4-diol + S-adenosyl-L-methionine = a 5-methoxy-2-methyl-3-(all-trans-polyprenyl)benzene-1,4-diol + S-adenosyl-L-homocysteine + H(+). The protein operates within quinol/quinone metabolism; menaquinone biosynthesis; menaquinol from 1,4-dihydroxy-2-naphthoate: step 2/2. It participates in cofactor biosynthesis; ubiquinone biosynthesis. Its function is as follows. Methyltransferase required for the conversion of demethylmenaquinol (DMKH2) to menaquinol (MKH2) and the conversion of 2-polyprenyl-6-methoxy-1,4-benzoquinol (DDMQH2) to 2-polyprenyl-3-methyl-6-methoxy-1,4-benzoquinol (DMQH2). This chain is Ubiquinone/menaquinone biosynthesis C-methyltransferase UbiE, found in Geobacter sulfurreducens (strain ATCC 51573 / DSM 12127 / PCA).